Reading from the N-terminus, the 145-residue chain is D-aminoacyl-tRNA deacylase (145 aa).

Positions 137-138 match the Gly-cisPro motif, important for rejection of L-amino acids motif; that stretch reads GP.

Belongs to the DTD family. In terms of assembly, homodimer.

It is found in the cytoplasm. The catalysed reaction is glycyl-tRNA(Ala) + H2O = tRNA(Ala) + glycine + H(+). It carries out the reaction a D-aminoacyl-tRNA + H2O = a tRNA + a D-alpha-amino acid + H(+). Functionally, an aminoacyl-tRNA editing enzyme that deacylates mischarged D-aminoacyl-tRNAs. Also deacylates mischarged glycyl-tRNA(Ala), protecting cells against glycine mischarging by AlaRS. Acts via tRNA-based rather than protein-based catalysis; rejects L-amino acids rather than detecting D-amino acids in the active site. By recycling D-aminoacyl-tRNA to D-amino acids and free tRNA molecules, this enzyme counteracts the toxicity associated with the formation of D-aminoacyl-tRNA entities in vivo and helps enforce protein L-homochirality. This is D-aminoacyl-tRNA deacylase from Lactobacillus gasseri (strain ATCC 33323 / DSM 20243 / BCRC 14619 / CIP 102991 / JCM 1131 / KCTC 3163 / NCIMB 11718 / NCTC 13722 / AM63).